The chain runs to 988 residues: Echinoderm microtubule-associated protein-like 4 (988 aa).

Position 1 is an N-acetylmethionine (Met-1). Residues 1 to 260 (MDGFAGSLDD…IPSDVDNYDD (260 aa)) are microtubule-binding. 5 positions are modified to phosphoserine: Ser-7, Ser-13, Ser-16, Ser-61, and Ser-79. The stretch at 14 to 63 (AASTSDVQDRLSALESRVQQQEDEITVLKAALADVLRRLAISEDHVASVK) forms a coiled coil. Thr-96 is subject to Phosphothreonine. The disordered stretch occupies residues 106–194 (TLSSAAKSGT…WENSDDSRNK (89 aa)). The span at 114–134 (GTEKKKEKPQGQREKKEDSHS) shows a compositional bias: basic and acidic residues. Ser-134 is subject to Phosphoserine; by NEK7. The span at 137 to 155 (QSPQIRASPSPQPSSQPLQ) shows a compositional bias: low complexity. A Phosphoserine; by NEK6 modification is found at Ser-144. Ser-146 is subject to Phosphoserine; by NEK7. Positions 156 to 168 (INRQTPESKSSAP) are enriched in polar residues. Position 171 is a phosphoserine (Ser-171). A compositionally biased stretch (basic and acidic residues) spans 176-193 (PTAEKSHNSWENSDDSRN). A Phosphoserine modification is found at Ser-200. Thr-201 carries the post-translational modification Phosphothreonine. Residue Tyr-237 is modified to Phosphotyrosine. Thr-248 is subject to Phosphothreonine. WD repeat units follow at residues 270-308 (LKLE…LFNY), 312-359 (TQRH…VWDS), 367-407 (VIGL…VWDW), 414-449 (AEIK…FWTW), 456-495 (RKQG…IWSK), 511-549 (QINR…LWDH), 554-590 (EREI…LRGT), 593-632 (DGFQ…MWNS), 636-673 (RLEW…VLDA), 679-715 (VSIH…LYTV), 722-761 (YSRY…YWDI), 771-829 (RSDC…LFQY), and 836-875 (APSH…QWKL). Residue Thr-620 is modified to Phosphothreonine; by NEK6 and NEK7. The interval 887-988 (ITDASVTKTP…EEERGITPLC (102 aa)) is disordered. The span at 890–904 (ASVTKTPASSSETAR) shows a compositional bias: polar residues. Phosphoserine occurs at positions 906, 908, and 914. Polar residues predominate over residues 927–939 (MGSSPTLVENSLE). Over residues 944–953 (PSEEQSEWGS) the composition is skewed to acidic residues.

The protein belongs to the WD repeat EMAP family. Homotrimer; self-association is mediated by the N-terminal coiled coil. Interacts (via WD repeats) with NUDC. Interacts with alpha- and beta-tubulin during mitosis. In terms of processing, phosphorylated during mitosis. Phosphorylation at Ser-144 and Ser-146 promotes its dissociation from microtubules during mitosis which is required for efficient chromosome congression.

It is found in the cytoplasm. Its subcellular location is the cytoskeleton. The protein localises to the spindle. The protein resides in the microtubule organizing center. It localises to the midbody. In terms of biological role, essential for the stability of microtubules (MTs). Essential for the formation of MTs. Required for the organization of the mitotic spindle and for the proper attachment of kinetochores to MTs. Promotes the recruitment of NUDC to the mitotic spindle for mitotic progression. The chain is Echinoderm microtubule-associated protein-like 4 (Eml4) from Mus musculus (Mouse).